We begin with the raw amino-acid sequence, 277 residues long: Large ribosomal subunit protein uL2 (277 aa).

The interval 222–277 (GVAMNPVDHPHGGGEGRTSGGRHPVTPWGKPTKGKKTRSNKATDKFIMRSRHQRKK) is disordered.

The protein belongs to the universal ribosomal protein uL2 family. Part of the 50S ribosomal subunit. Forms a bridge to the 30S subunit in the 70S ribosome.

One of the primary rRNA binding proteins. Required for association of the 30S and 50S subunits to form the 70S ribosome, for tRNA binding and peptide bond formation. It has been suggested to have peptidyltransferase activity; this is somewhat controversial. Makes several contacts with the 16S rRNA in the 70S ribosome. This Brucella melitensis biotype 1 (strain ATCC 23456 / CCUG 17765 / NCTC 10094 / 16M) protein is Large ribosomal subunit protein uL2.